Here is a 201-residue protein sequence, read N- to C-terminus: Large ribosomal subunit protein bL25 (201 aa).

A disordered region spans residues 179-201 (VSITAPRVEAEKTEEEEPESTEE). The segment covering 190–201 (KTEEEEPESTEE) has biased composition (acidic residues).

The protein belongs to the bacterial ribosomal protein bL25 family. CTC subfamily. In terms of assembly, part of the 50S ribosomal subunit; part of the 5S rRNA/L5/L18/L25 subcomplex. Contacts the 5S rRNA. Binds to the 5S rRNA independently of L5 and L18.

This is one of the proteins that binds to the 5S RNA in the ribosome where it forms part of the central protuberance. The polypeptide is Large ribosomal subunit protein bL25 (Prosthecochloris aestuarii (strain DSM 271 / SK 413)).